A 266-amino-acid polypeptide reads, in one-letter code: Apolipoprotein A-I (266 aa).

Residues 1 to 18 (MKAVVLTLAVLFLTGSQA) form the signal peptide. A run of 2 repeats spans residues 67–88 (LKLL…EQIG) and 89–110 (PVTQ…QEMS). Residues 67 to 266 (LKLLDNWDSL…DEATKKLNSQ (200 aa)) form a 10 X approximate tandem repeats region. Methionine sulfoxide is present on methionine 109. The stretch at 111–121 (KDLEEVKKKVQ) is one 3; half-length repeat. Tandem repeats lie at residues 122-143 (PYLD…QKVA), 144-165 (PLGA…EKLS), 166-187 (PLAE…AQLA), 188-209 (PYSE…EGGG), and 210-231 (AALT…EKAK). The 9; half-length repeat unit spans residues 232–242 (PALEDLRQGLL). The stretch at 243–266 (PVLENFRVSLLAAVDEATKKLNSQ) is repeat 10.

The protein belongs to the apolipoprotein A1/A4/E family. Homodimer. Interacts with APOA1BP and CLU. Component of a sperm activating protein complex (SPAP), consisting of APOA1, an immunoglobulin heavy chain, an immunoglobulin light chain and albumin. Interacts with NDRG1. Interacts with SCGB3A2. Interacts with NAXE and YJEFN3. In terms of processing, glycosylated. Post-translationally, palmitoylated. Phosphorylation sites are present in the extracellular medium.

It is found in the secreted. Functionally, participates in the reverse transport of cholesterol from tissues to the liver for excretion by promoting cholesterol efflux from tissues and by acting as a cofactor for the lecithin cholesterol acyltransferase (LCAT). As part of the SPAP complex, activates spermatozoa motility. This Mirounga angustirostris (Northern elephant seal) protein is Apolipoprotein A-I (APOA1).